The primary structure comprises 418 residues: Equilibrative nucleotide transporter 4 (418 aa).

Transmembrane regions (helical) follow at residues 20–40, 54–74, 85–105, 108–128, 147–169, 186–206, 264–284, 291–311, 326–346, 353–373, and 392–412; these read MVVCCILGIGSLFSWNSMLTI, SRVFTLIYQPIALGTIMILAY, ILTGYILFTISTFLLIVLDLT, GHGGIGHYIVLCTIVASFGLA, LIQSYMAGSGMAGALTSVLRLIT, IFLAISTFIELLCVILYAYVF, HAVNLFLIYVLTLSIFPGFLY, GLGDWYALILVATYNFWDLFG, KALTIAVLTRYFLVPAFYFTA, WMIMLVSILGLTTGHLTVCIM, and LVVFILGGAVVGISLGWLWLI.

This sequence belongs to the SLC29A/ENT transporter (TC 2.A.57) family. As to expression, expressed in leaves and at lowe levels in stems and flowers.

The protein resides in the cell membrane. Functionally, nucleoside transporter that can mediate uptake of adenosine, uridine, guanosine or cytidine when expressed in a heterologous system (yeast). This chain is Equilibrative nucleotide transporter 4 (ENT4), found in Arabidopsis thaliana (Mouse-ear cress).